A 187-amino-acid polypeptide reads, in one-letter code: Threonylcarbamoyl-AMP synthase (187 aa).

Residues 3-187 (QVLPADAAEL…ARSGTVIREG (185 aa)) enclose the YrdC-like domain.

The protein belongs to the SUA5 family. TsaC subfamily.

It localises to the cytoplasm. It carries out the reaction L-threonine + hydrogencarbonate + ATP = L-threonylcarbamoyladenylate + diphosphate + H2O. Required for the formation of a threonylcarbamoyl group on adenosine at position 37 (t(6)A37) in tRNAs that read codons beginning with adenine. Catalyzes the conversion of L-threonine, HCO(3)(-)/CO(2) and ATP to give threonylcarbamoyl-AMP (TC-AMP) as the acyladenylate intermediate, with the release of diphosphate. The chain is Threonylcarbamoyl-AMP synthase from Shewanella pealeana (strain ATCC 700345 / ANG-SQ1).